Reading from the N-terminus, the 266-residue chain is Phosphonates import ATP-binding protein PhnC (266 aa).

An ABC transporter domain is found at 2-246 (IEIKNVSKTY…KFAEIYGRPI (245 aa)). Position 35–42 (35–42 (GLSGAGKS)) interacts with ATP.

It belongs to the ABC transporter superfamily. Phosphonates importer (TC 3.A.1.9.1) family. The complex is composed of two ATP-binding proteins (PhnC), two transmembrane proteins (PhnE) and a solute-binding protein (PhnD).

It localises to the cell membrane. It catalyses the reaction phosphonate(out) + ATP + H2O = phosphonate(in) + ADP + phosphate + H(+). Part of the ABC transporter complex PhnCDE involved in phosphonates import. Responsible for energy coupling to the transport system. This chain is Phosphonates import ATP-binding protein PhnC, found in Shouchella clausii (strain KSM-K16) (Alkalihalobacillus clausii).